We begin with the raw amino-acid sequence, 367 residues long: Peptide chain release factor 2 (367 aa).

Glutamine 254 is subject to N5-methylglutamine.

This sequence belongs to the prokaryotic/mitochondrial release factor family. Methylated by PrmC. Methylation increases the termination efficiency of RF2.

It is found in the cytoplasm. Functionally, peptide chain release factor 2 directs the termination of translation in response to the peptide chain termination codons UGA and UAA. In Neisseria gonorrhoeae (strain ATCC 700825 / FA 1090), this protein is Peptide chain release factor 2.